We begin with the raw amino-acid sequence, 185 residues long: Photosystem I assembly protein Ycf4 (185 aa).

2 helical membrane passes run 24-44 and 66-86; these read YIIG…SISS and IIMG…WYLV.

It belongs to the Ycf4 family.

The protein resides in the cellular thylakoid membrane. In terms of biological role, seems to be required for the assembly of the photosystem I complex. This Prochlorococcus marinus (strain AS9601) protein is Photosystem I assembly protein Ycf4.